A 137-amino-acid polypeptide reads, in one-letter code: Peptide methionine sulfoxide reductase MsrB (137 aa).

Residues Met-1 to Thr-33 form a disordered region. The MsrB domain maps to Asp-13–Ala-135. Cys-52, Cys-55, Cys-101, and Cys-104 together coordinate Zn(2+). The active-site Nucleophile is the Cys-124.

This sequence belongs to the MsrB Met sulfoxide reductase family. The cofactor is Zn(2+).

It carries out the reaction L-methionyl-[protein] + [thioredoxin]-disulfide + H2O = L-methionyl-(R)-S-oxide-[protein] + [thioredoxin]-dithiol. The chain is Peptide methionine sulfoxide reductase MsrB from Thioalkalivibrio sulfidiphilus (strain HL-EbGR7).